A 920-amino-acid chain; its full sequence is Nitrate reductase [NADH] (920 aa).

Residues 1-69 (MAASVENRQF…DTSDDEEDEA (69 aa)) are disordered. The span at 60-69 (DTSDDEEDEA) shows a compositional bias: acidic residues. Cys-185 provides a ligand contact to Mo-molybdopterin. Residues 534–609 (SLTFTMSEVK…LEEYRVGELI (76 aa)) form the Cytochrome b5 heme-binding domain. Positions 569 and 592 each coordinate heme. One can recognise an FAD-binding FR-type domain in the interval 663–775 (REKIPCKLIS…KGPLGHIEYM (113 aa)). FAD-binding positions include 715-718 (RAYT), 732-736 (LVKIY), Phe-737, Phe-744, 749-751 (LMS), and Thr-802.

Belongs to the nitrate reductase family. In terms of assembly, homodimer. FAD serves as cofactor. It depends on heme as a cofactor. Mo-molybdopterin is required as a cofactor. In terms of tissue distribution, in cortical cells of roots grown at low nitrate concentrations, in vascular tissues of roots at high nitrate concentrations and in root apex under both conditions.

It catalyses the reaction nitrite + NAD(+) + H2O = nitrate + NADH + H(+). In terms of biological role, nitrate reductase is a key enzyme involved in the first step of nitrate assimilation in plants, fungi and bacteria. The sequence is that of Nitrate reductase [NADH] (NIA) from Cichorium intybus (Chicory).